We begin with the raw amino-acid sequence, 157 residues long: Protein snakeskin (157 aa).

Residues 2–6 (VSVQT) lie on the Cytoplasmic side of the membrane. Residues 7 to 27 (IATIVVKTFKIVLNIIILVLY) traverse the membrane as a helical segment. The Extracellular segment spans residues 28 to 53 (RTGYNGEFLGVGGTWNLNEEKNPDAE). The helical transmembrane segment at 54–74 (IVASGVIVGYLIYTLVQIVTF) threads the bilayer. Over 75–87 (LFGTTEHKRALSE) the chain is Cytoplasmic. The chain crosses the membrane as a helical span at residues 88-108 (IVMNFVGVFLWIAVGAVALHY). At 109-130 (WGGYQGEHQFQFVFAEKQVGLA) the chain is on the extracellular side. The helical transmembrane segment at 131–151 (VGALCVINGAIYLLDTALSVI) threads the bilayer. Residues 152–157 (HFTKEM) lie on the Cytoplasmic side of the membrane.

As to expression, expressed in midgut epithelium (at protein level).

It is found in the apicolateral cell membrane. Its subcellular location is the cell junction. The protein localises to the septate junction. Its function is as follows. Required for assembly of smooth septate junctions (sSJs). May be important for barrier function of the midgut epithelium. The protein is Protein snakeskin of Bombyx mori (Silk moth).